A 788-amino-acid chain; its full sequence is Integrin beta-3 (788 aa).

The signal sequence occupies residues 1–26 (MRARPRPRPLWATVLALGALAGVGVG). The Extracellular segment spans residues 27 to 718 (GPNICTTRGV…EEPECPKGPD (692 aa)). The 47-residue stretch at 30-76 (ICTTRGVSSCQQCLAVSPMCAWCSDEALPLGSPRCDLKENLLKDNCA) folds into the PSI domain. 19 cysteine pairs are disulfide-bonded: Cys31/Cys49, Cys39/Cys461, Cys42/Cys64, Cys52/Cys75, Cys203/Cys210, Cys258/Cys299, Cys400/Cys412, Cys432/Cys459, Cys463/Cys483, Cys474/Cys486, Cys488/Cys497, Cys499/Cys529, Cys512/Cys527, Cys521/Cys532, Cys534/Cys547, Cys549/Cys570, Cys554/Cys568, Cys562/Cys573, and Cys575/Cys584. A glycan (N-linked (GlcNAc...) asparagine) is linked at Asn125. One can recognise a VWFA domain in the interval 135–377 (DYPVDIYYLM…QLIVDAYGKI (243 aa)). Mg(2+)-binding residues include Ser147 and Ser149. Positions 149, 152, 153, and 184 each coordinate Ca(2+). Residues 203–210 (CYDMKTTC) are involved in CX3CL1-, NRG1-, FGF1- and IGF1-binding. Residues Asn241, Asp243, Pro245, Glu246, and Asp277 each contribute to the Ca(2+) site. Glu246 lines the Mg(2+) pocket. Positions 293–313 (QPNDGQCHVGSDNHYSASTTM) are CX3CL1-binding. An N-linked (GlcNAc...) asparagine glycan is attached at Asn346. A Ca(2+)-binding site is contributed by Met361. Asn397 is a glycosylation site (N-linked (GlcNAc...) asparagine). I-EGF domains lie at 463–498 (CQAQ…SQCE), 499–548 (CSEE…KYCE), 549–585 (CDDF…YYCN), and 586–625 (CTTR…DTCE). Asn478 carries N-linked (GlcNAc...) asparagine glycosylation. Asn585 is a glycosylation site (N-linked (GlcNAc...) asparagine). 9 disulfide bridges follow: Cys586/Cys609, Cys593/Cys607, Cys601/Cys612, Cys614/Cys624, Cys627/Cys630, Cys634/Cys681, Cys640/Cys661, Cys643/Cys657, and Cys689/Cys713. Asn680 carries an N-linked (GlcNAc...) asparagine glycan. A helical membrane pass occupies residues 719-741 (ILVVLLSVMGAILLIGLAALLIW). Residues 742 to 788 (KLLITIHDRKEFAKFEEERARAKWDTANNPLYKEATSTFTNITYRGT) lie on the Cytoplasmic side of the membrane. A Phosphothreonine modification is found at Thr767. Position 773 is a phosphotyrosine (Tyr773). Positions 777–783 (TSTFTNI) match the LIR motif. At Thr779 the chain carries Phosphothreonine; by PDPK1 and PKB/AKT1; in vitro. At Tyr785 the chain carries Phosphotyrosine.

This sequence belongs to the integrin beta chain family. Heterodimer of an alpha and a beta subunit. Beta-3 (ITGB3) associates with either alpha-IIb (ITGA2B) or alpha-V (ITGAV). Isoform Beta-3C interacts with FLNB. Interacts with COMP. Interacts with PDIA6 following platelet stimulation. Interacts with SYK; upon activation by ITGB3 promotes platelet adhesion. Interacts with MYO10. Interacts with DAB2. Interacts with FERMT2. Interacts with EMP2; regulates the levels of the heterodimer ITGA5:ITGB3 integrin expression on the plasma membrane. Integrin ITGAV:ITGB3 interacts with FBLN5 (via N-terminus). ITGAV:ITGB3 interacts with CCN3. ITGAV:ITGB3 and ITGA2B:ITGB3 interact with SELP (via C-type lectin domain); the interaction mediates cell-cell interaction and adhesion. ITGAV:ITGB3 is found in a ternary complex with CX3CR1 and CX3CL1. ITGAV:ITGB3 is found in a ternary complex with NRG1 and ERBB3. ITGAV:ITGB3 is found in a ternary complex with FGF1 and FGFR1. ITGAV:ITGB3 interacts with FGF2; it is likely that FGF2 can simultaneously bind ITGAV:ITGB3 and FGF receptors. ITGAV:ITGB3 binds to IL1B. ITGAV:ITGB3 is found in a ternary complex with IGF1 and IGF1R. ITGAV:ITGB3 interacts with IGF2. ITGAV:ITGB3 interacts with FBN1. ITGAV:ITGB3 interacts with CD9, CD81 and CD151 (via second extracellular domain). Interacts (via the allosteric site (site 2)) with CXCL12 in a CXCR4-independent manner. Interacts with MXRA8/DICAM; the interaction inhibits ITGAV:ITGB3 heterodimer formation. ITGAV:ITGB3 interacts with PTN. Forms a complex with PTPRZ1 and PTN that stimulates endothelial cell migration through ITGB3 Tyr-773 phosphorylation. ITGAV:ITGB3 interacts with SLC6A4. Interacts with SLC6A4 (via C-terminus); this interaction regulates SLC6A4 trafficking. ITGA2B:ITGB3 interacts with PPIA/CYPA; the interaction is ROS and PPIase activity-dependent and is increased in the presence of thrombin. Interacts with tensin TNS3; TNS3 also interacts with PEAK1, thus acting as an adapter molecule to bridge the association of PEAK1 with ITGB3. Interacts with TM4SF19. As to quaternary structure, (Microbial infection) Integrin ITGAV:ITGB3 interacts with herpes virus 8/HHV-8 glycoprotein B. In terms of assembly, (Microbial infection) Integrin ITGAV:ITGB3 interacts with coxsackievirus A9 capsid proteins. (Microbial infection) Interacts with Hantaan virus glycoprotein G. As to quaternary structure, (Microbial infection) Integrin ITGAV:ITGB3 interacts with cytomegalovirus/HHV-5 gH:gL proteins. In terms of assembly, (Microbial infection) Integrin ITGA5:ITGB3 interacts with human metapneumovirus fusion protein. (Microbial infection) Integrin ITGAV:ITGB3 interacts with human parechovirus 1 capsid proteins. As to quaternary structure, (Microbial infection) Integrin ITGAV:ITGB3 interacts with west nile virus envelope protein E. In terms of assembly, (Microbial infection) Interacts with HIV-1 Tat. ITGAV:ITGB3 interacts with AGRA2. Phosphorylated on tyrosine residues in response to thrombin-induced platelet aggregation. Probably involved in outside-in signaling. A peptide (AA 740-762) is capable of binding GRB2 only when both Tyr-773 and Tyr-785 are phosphorylated. Phosphorylation of Thr-779 inhibits SHC binding. In terms of tissue distribution, isoform beta-3A and isoform beta-3C are widely expressed. Isoform beta-3A is specifically expressed in osteoblast cells; isoform beta-3C is specifically expressed in prostate and testis.

It localises to the cell membrane. The protein resides in the cell projection. The protein localises to the lamellipodium membrane. Its subcellular location is the cell junction. It is found in the focal adhesion. It localises to the postsynaptic cell membrane. The protein resides in the synapse. Integrin alpha-V/beta-3 (ITGAV:ITGB3) is a receptor for cytotactin, fibronectin, laminin, matrix metalloproteinase-2, osteopontin, osteomodulin, prothrombin, thrombospondin, vitronectin and von Willebrand factor. Integrin alpha-IIb/beta-3 (ITGA2B:ITGB3) is a receptor for fibronectin, fibrinogen, plasminogen, prothrombin, thrombospondin and vitronectin. Integrins alpha-IIb/beta-3 and alpha-V/beta-3 recognize the sequence R-G-D in a wide array of ligands. Integrin alpha-IIb/beta-3 recognizes the sequence H-H-L-G-G-G-A-K-Q-A-G-D-V in fibrinogen gamma chain. Following activation integrin alpha-IIb/beta-3 brings about platelet/platelet interaction through binding of soluble fibrinogen. This step leads to rapid platelet aggregation which physically plugs ruptured endothelial surface. Fibrinogen binding enhances SELP expression in activated platelets. ITGAV:ITGB3 binds to fractalkine (CX3CL1) and acts as its coreceptor in CX3CR1-dependent fractalkine signaling. ITGAV:ITGB3 binds to NRG1 (via EGF domain) and this binding is essential for NRG1-ERBB signaling. ITGAV:ITGB3 binds to FGF1 and this binding is essential for FGF1 signaling. ITGAV:ITGB3 binds to FGF2 and this binding is essential for FGF2 signaling. ITGAV:ITGB3 binds to IGF1 and this binding is essential for IGF1 signaling. ITGAV:ITGB3 binds to IGF2 and this binding is essential for IGF2 signaling. ITGAV:ITGB3 binds to IL1B and this binding is essential for IL1B signaling. ITGAV:ITGB3 binds to PLA2G2A via a site (site 2) which is distinct from the classical ligand-binding site (site 1) and this induces integrin conformational changes and enhanced ligand binding to site 1. ITGAV:ITGB3 acts as a receptor for fibrillin-1 (FBN1) and mediates R-G-D-dependent cell adhesion to FBN1. In brain, plays a role in synaptic transmission and plasticity. Involved in the regulation of the serotonin neurotransmission, is required to localize to specific compartments within the synapse the serotonin receptor SLC6A4 and for an appropriate reuptake of serotonin. Controls excitatory synaptic strength by regulating GRIA2-containing AMPAR endocytosis, which affects AMPAR abundance and composition. ITGAV:ITGB3 act as a receptor for CD40LG. ITGAV:ITGB3 acts as a receptor for IBSP and promotes cell adhesion and migration to IBSP. Functionally, (Microbial infection) Integrin ITGAV:ITGB3 acts as a receptor for Herpes virus 8/HHV-8. In terms of biological role, (Microbial infection) Integrin ITGAV:ITGB3 acts as a receptor for Coxsackievirus A9. Its function is as follows. (Microbial infection) Acts as a receptor for Hantaan virus. (Microbial infection) Integrin ITGAV:ITGB3 acts as a receptor for Cytomegalovirus/HHV-5. Functionally, (Microbial infection) Integrin ITGA5:ITGB3 acts as a receptor for Human metapneumovirus. In terms of biological role, (Microbial infection) Integrin ITGAV:ITGB3 acts aP05556s a receptor for Human parechovirus 1. Its function is as follows. (Microbial infection) Integrin ITGAV:ITGB3 acts as a receptor for West nile virus. (Microbial infection) In case of HIV-1 infection, the interaction with extracellular viral Tat protein seems to enhance angiogenesis in Kaposi's sarcoma lesions. The sequence is that of Integrin beta-3 from Homo sapiens (Human).